Consider the following 425-residue polypeptide: Transmembrane protein 184A (425 aa).

The next 7 membrane-spanning stretches (helical) occupy residues 51–71, 96–116, 133–153, 189–209, 226–246, 261–281, and 303–323; these read LFLTSALARGVSGVFVWTALL, LLFIVPIYAFDSWLSLLLLGG, FVIYSFLTLCFQYLGGESAIM, TLQFCIVKPVMALITIILQAF, VTLVYNASVSLALYALFLFYF, FLTIKAIIFLSFWQGMLLAIL, and LAAGYQNFLICVEMLFASLAL. The tract at residues 375 to 425 is disordered; it reads QYTQQSTHEAPGPGQGGHPAPSTHPGPASGSGGGKKSRNIEKRMLIPSEDL. A compositionally biased stretch (low complexity) spans 392 to 402; the sequence is HPAPSTHPGPA.

Belongs to the TMEM184 family. In terms of tissue distribution, expressed in testis, pancreas, parotid salivary gland and mammary gland (at protein level).

The protein resides in the cell membrane. It is found in the cytoplasm. Its subcellular location is the perinuclear region. The protein localises to the cytoplasmic vesicle membrane. It localises to the early endosome membrane. The protein resides in the endosome. It is found in the cytoplasmic vesicle. Its subcellular location is the secretory vesicle membrane. Acts as a heparin receptor in vascular cells. May be involved in vesicle transport in exocrine cells and Sertoli cells. The polypeptide is Transmembrane protein 184A (Tmem184a) (Mus musculus (Mouse)).